The following is a 321-amino-acid chain: Replication factor C small subunit (321 aa).

G46–T53 is a binding site for ATP.

This sequence belongs to the activator 1 small subunits family. RfcS subfamily. As to quaternary structure, heterohexamer composed of four small subunits (RfcS) and two large subunits (RfcL).

Part of the RFC clamp loader complex which loads the PCNA sliding clamp onto DNA. The complex possesses DNA-dependent ATPase activity which is further stimulated by PCNA. In conjunction with PCNA stimulates DNA synthesis by PolB, relieving inhibition by replication protein A (RPA). The chain is Replication factor C small subunit (rfcS) from Methanothermobacter thermautotrophicus (strain ATCC 29096 / DSM 1053 / JCM 10044 / NBRC 100330 / Delta H) (Methanobacterium thermoautotrophicum).